The primary structure comprises 244 residues: RAD51-like protein 1 (244 aa).

In terms of assembly, interacts with brc-2 and rad-51.

The protein resides in the nucleus. Functionally, has a role in the homologous recombination repair (HRR) of genomic DNA during meiosis. Required for rad-51 recruitment onto ssDNA gaps generated at stalled replication fork barriers. The sequence is that of RAD51-like protein 1 from Caenorhabditis briggsae.